The sequence spans 411 residues: 2,3-bisphosphoglycerate-independent phosphoglycerate mutase (411 aa).

Belongs to the BPG-independent phosphoglycerate mutase family. A-PGAM subfamily.

It carries out the reaction (2R)-2-phosphoglycerate = (2R)-3-phosphoglycerate. It functions in the pathway carbohydrate degradation; glycolysis; pyruvate from D-glyceraldehyde 3-phosphate: step 3/5. Its function is as follows. Catalyzes the interconversion of 2-phosphoglycerate and 3-phosphoglycerate. This Pyrobaculum calidifontis (strain DSM 21063 / JCM 11548 / VA1) protein is 2,3-bisphosphoglycerate-independent phosphoglycerate mutase.